The sequence spans 285 residues: Ribosomal RNA small subunit methyltransferase A (285 aa).

S-adenosyl-L-methionine-binding residues include histidine 27, leucine 29, glycine 54, glutamate 75, aspartate 100, and asparagine 120.

The protein belongs to the class I-like SAM-binding methyltransferase superfamily. rRNA adenine N(6)-methyltransferase family. RsmA subfamily.

The protein resides in the cytoplasm. The catalysed reaction is adenosine(1518)/adenosine(1519) in 16S rRNA + 4 S-adenosyl-L-methionine = N(6)-dimethyladenosine(1518)/N(6)-dimethyladenosine(1519) in 16S rRNA + 4 S-adenosyl-L-homocysteine + 4 H(+). Specifically dimethylates two adjacent adenosines (A1518 and A1519) in the loop of a conserved hairpin near the 3'-end of 16S rRNA in the 30S particle. May play a critical role in biogenesis of 30S subunits. The protein is Ribosomal RNA small subunit methyltransferase A of Phenylobacterium zucineum (strain HLK1).